The primary structure comprises 191 residues: Clusterin (191 aa).

Residues Asn-79, Asn-116, Asn-142, and Asn-162 are each glycosylated (N-linked (GlcNAc...) asparagine). Phosphoserine is present on Ser-184.

Belongs to the clusterin family. As to quaternary structure, antiparallel disulfide-linked heterodimer of an alpha chain and a beta chain. Self-associates and forms higher oligomers. Interacts with a broad range of misfolded proteins, including APP, APOC2 and LYZ. Slightly acidic pH promotes interaction with misfolded proteins. Forms high-molecular weight oligomers upon interaction with misfolded proteins. Interacts with APOA1, LRP2, CLUAP1 and PON1. Interacts with the complement membrane attack complex. Interacts (via alpha chain) with XRCC6. Interacts with SYVN1, COMMD1, BTRC, CUL1 and with ubiquitin and SCF (SKP1-CUL1-F-box protein) E3 ubiquitin-protein ligase complexes. Interacts (via alpha chain) with BAX in stressed cells, where BAX undergoes a conformation change leading to association with the mitochondrial membrane. Does not interact with BAX in unstressed cells. Found in a complex with LTF, CLU, EPPIN and SEMG1. Interacts (immaturely glycosylated pre-secreted form) with HSPA5; this interaction promotes CLU stability and facilitates stress-induced CLU retrotranslocation from the secretory pathway to the mitochondria, thereby reducing stress-induced apoptosis by stabilizing mitochondrial membrane integrity. Interacts with BCL2L1; this interaction releases and activates BAX and promotes cell death. Interacts with TGFBR2 and ACVR1. Interacts (secreted form) with STMN3; this interaction may act as an important modulator during neuronal differentiation. In terms of processing, proteolytically cleaved on its way through the secretory system, probably within the Golgi lumen. Proteolytic cleavage is not necessary for its chaperone activity. All non-secreted forms are not proteolytically cleaved. Chaperone activity of uncleaved forms is dependent on a non-reducing environment. Polyubiquitinated, leading to proteasomal degradation. Under cellular stress, the intracellular level of cleaved form is reduced due to proteasomal degradation. Post-translationally, heavily N-glycosylated. About 30% of the protein mass is comprised of complex N-linked carbohydrate. Endoplasmic reticulum (ER) stress induces changes in glycosylation status and increases level of hypoglycosylated forms. Core carbohydrates are essential for chaperone activity. Non-secreted forms are hypoglycosylated or unglycosylated.

Its subcellular location is the secreted. It is found in the nucleus. The protein resides in the cytoplasm. The protein localises to the mitochondrion membrane. It localises to the cytosol. Its subcellular location is the microsome. It is found in the endoplasmic reticulum. The protein resides in the mitochondrion. The protein localises to the perinuclear region. It localises to the cytoplasmic vesicle. Its subcellular location is the secretory vesicle. It is found in the chromaffin granule. Its function is as follows. Functions as extracellular chaperone that prevents aggregation of non native proteins. Prevents stress-induced aggregation of blood plasma proteins. Inhibits formation of amyloid fibrils by APP, APOC2, B2M, CALCA, CSN3, SNCA and aggregation-prone LYZ variants (in vitro). Does not require ATP. Maintains partially unfolded proteins in a state appropriate for subsequent refolding by other chaperones, such as HSPA8/HSC70. Does not refold proteins by itself. Binding to cell surface receptors triggers internalization of the chaperone-client complex and subsequent lysosomal or proteasomal degradation. When secreted, protects cells against apoptosis and against cytolysis by complement: inhibits assembly of the complement membrane attack complex (MAC) by preventing polymerization of C9 pore component of the MAC complex. Intracellular forms interact with ubiquitin and SCF (SKP1-CUL1-F-box protein) E3 ubiquitin-protein ligase complexes and promote the ubiquitination and subsequent proteasomal degradation of target proteins. Promotes proteasomal degradation of COMMD1 and IKBKB. Modulates NF-kappa-B transcriptional activity. Following stress, promotes apoptosis. Inhibits apoptosis when associated with the mitochondrial membrane by interference with BAX-dependent release of cytochrome c into the cytoplasm. Plays a role in the regulation of cell proliferation. An intracellular form suppresses stress-induced apoptosis by stabilizing mitochondrial membrane integrity through interaction with HSPA5. Secreted form does not affect caspase or BAX-mediated intrinsic apoptosis and TNF-induced NF-kappa-B-activity. Secreted form act as an important modulator during neuronal differentiation through interaction with STMN3. Plays a role in the clearance of immune complexes that arise during cell injury. This Mesocricetus auratus (Golden hamster) protein is Clusterin.